The following is a 161-amino-acid chain: Large ribosomal subunit protein bL17 (161 aa).

A disordered region spans residues Lys-126–Glu-161. The span at Lys-129–Lys-138 shows a compositional bias: basic residues. A compositionally biased stretch (low complexity) spans Glu-142–Thr-152.

This sequence belongs to the bacterial ribosomal protein bL17 family. In terms of assembly, part of the 50S ribosomal subunit. Contacts protein L32.

The sequence is that of Large ribosomal subunit protein bL17 from Bacteroides fragilis (strain ATCC 25285 / DSM 2151 / CCUG 4856 / JCM 11019 / LMG 10263 / NCTC 9343 / Onslow / VPI 2553 / EN-2).